A 208-amino-acid polypeptide reads, in one-letter code: MSTPHWFDQGSLVLASNNKGKVAEFEKLFEQLKLPVEIIPQGRLNIPDAIEDGLSFIENAIIKARHASKISGKPAMADDSGICVPVLGGAPGIYSARYAGEHGDDAANNAKLLNDLLPFRKNGEAIEGMFVCVLALVTHAEDPLPQIFQGIWHGEILEAPRGENGFGYDPLFWLPELQVSSAELSKEDKNKISHRGQAMQLFRESLQK.

Substrate is bound at residue 16–21 (SNNKGK). Aspartate 79 serves as the catalytic Proton acceptor. Aspartate 79 is a binding site for Mg(2+). Residues serine 80, 166–169 (FGYD), lysine 189, and 194–195 (HR) each bind substrate.

It belongs to the HAM1 NTPase family. Homodimer. Mg(2+) is required as a cofactor.

The catalysed reaction is XTP + H2O = XMP + diphosphate + H(+). The enzyme catalyses dITP + H2O = dIMP + diphosphate + H(+). It catalyses the reaction ITP + H2O = IMP + diphosphate + H(+). Pyrophosphatase that catalyzes the hydrolysis of nucleoside triphosphates to their monophosphate derivatives, with a high preference for the non-canonical purine nucleotides XTP (xanthosine triphosphate), dITP (deoxyinosine triphosphate) and ITP. Seems to function as a house-cleaning enzyme that removes non-canonical purine nucleotides from the nucleotide pool, thus preventing their incorporation into DNA/RNA and avoiding chromosomal lesions. This Acinetobacter baumannii (strain AB307-0294) protein is dITP/XTP pyrophosphatase.